A 447-amino-acid polypeptide reads, in one-letter code: MTIYHFVGIKGSGMSALAQILHDKGFQVQGSDVDKYFFTQKALEEKQIPIMTFSADNIQEGLTIIAGNAFPDTHEEIERALELGLPVIRYHKFLGQLIDGYTSIAITGSHGKTSTTGLLSHVVGAIRPTSYLIGDGTGSGTKGAEYFALEACEYQRHFLAYKPTYAIMTNIDWDHPDYFKSVDDVFNAFETLGKQVKKAVFALGDDAELRKLSLDIPIIYFGFGEENEFQAKNVIKETTGTKFDVYHRGEFLGSFEIPAYGDHNVLNALSVIALCDYEGLPVEDVKKELKTFEGVKRRFSITEKANQVLVDDYAHHPSEIRATVNAARQKYPDKKVVAVFQPHTFTRTRTFLQGFADSLNLADEVYLCDIFGSAREKTGNLTIADLAHKTKGNHIIKEEHTEELLKYPEAVILFMGAGDVQKFQAAYEKVLDHEVLTEADLKKSAIN.

108–114 is an ATP binding site; it reads GSHGKTS.

This sequence belongs to the MurCDEF family.

It localises to the cytoplasm. The catalysed reaction is UDP-N-acetyl-alpha-D-muramate + L-alanine + ATP = UDP-N-acetyl-alpha-D-muramoyl-L-alanine + ADP + phosphate + H(+). Its pathway is cell wall biogenesis; peptidoglycan biosynthesis. Its function is as follows. Cell wall formation. This Listeria monocytogenes serotype 4a (strain HCC23) protein is UDP-N-acetylmuramate--L-alanine ligase.